The primary structure comprises 401 residues: Mitochondrial distribution and morphology protein 12 (401 aa).

In terms of domain architecture, SMP-LTD spans 1–401; it reads MSIDINWDTL…VYPSFWTFLV (401 aa). The span at 70-88 shows a compositional bias: acidic residues; the sequence is YEEDEDYPDNEDDDDDEAG. Disordered stretches follow at residues 70-95 and 190-247; these read YEEDEDYPDNEDDDDDEAGLDSNPRN and SLTL…EKSP. Residues 195 to 205 are compositionally biased toward low complexity; sequence PQSHPDPSSRP. A compositionally biased stretch (basic and acidic residues) spans 209-220; the sequence is HQHDDERRRSLA.

This sequence belongs to the MDM12 family. Component of the ER-mitochondria encounter structure (ERMES) or MDM complex, composed of MMM1, MDM10, MDM12 and MDM34. An MMM1 homodimer associates with one molecule of MDM12 on each side in a pairwise head-to-tail manner, and the SMP-LTD domains of MMM1 and MDM12 generate a continuous hydrophobic tunnel for phospholipid trafficking.

Its subcellular location is the mitochondrion outer membrane. It is found in the endoplasmic reticulum membrane. Its function is as follows. Component of the ERMES/MDM complex, which serves as a molecular tether to connect the endoplasmic reticulum (ER) and mitochondria. Components of this complex are involved in the control of mitochondrial shape and protein biogenesis, and function in nonvesicular lipid trafficking between the ER and mitochondria. MDM12 is required for the interaction of the ER-resident membrane protein MMM1 and the outer mitochondrial membrane-resident beta-barrel protein MDM10. The MDM12-MMM1 subcomplex functions in the major beta-barrel assembly pathway that is responsible for biogenesis of all mitochondrial outer membrane beta-barrel proteins, and acts in a late step after the SAM complex. The MDM10-MDM12-MMM1 subcomplex further acts in the TOM40-specific pathway after the action of the MDM12-MMM1 complex. Essential for establishing and maintaining the structure of mitochondria and maintenance of mtDNA nucleoids. This is Mitochondrial distribution and morphology protein 12 from Phaeosphaeria nodorum (strain SN15 / ATCC MYA-4574 / FGSC 10173) (Glume blotch fungus).